We begin with the raw amino-acid sequence, 256 residues long: Ferritin-3, chloroplastic (256 aa).

The N-terminal 49 residues, 1–49 (MLLRTASSFSLLKANADHILPLPNSSSSGIIRYSQSLGKNLVPCATKDT), are a transit peptide targeting the chloroplast. The interval 50 to 82 (NNRPLTGVVFEPFEEVKKELDLVPTVPQASLAR) is extension peptide (EP). The 154-residue stretch at 83 to 236 (QKYTDDCEAT…EYVAQLRRVG (154 aa)) folds into the Ferritin-like diiron domain. Fe cation contacts are provided by Glu-100, Glu-135, His-138, Glu-184, and Gln-218.

This sequence belongs to the ferritin family. As to quaternary structure, oligomer of 24 subunits. There are two types of subunits: L (light) chain and H (heavy) chain. The major chain can be light or heavy, depending on the species and tissue type. The functional molecule forms a roughly spherical shell with a diameter of 12 nm and contains a central cavity into which the insoluble mineral iron core is deposited.

The protein localises to the plastid. It is found in the chloroplast. It catalyses the reaction 4 Fe(2+) + O2 + 4 H(+) = 4 Fe(3+) + 2 H2O. In terms of biological role, stores iron in a soluble, non-toxic, readily available form. Important for iron homeostasis. Has ferroxidase activity. Iron is taken up in the ferrous form and deposited as ferric hydroxides after oxidation. This chain is Ferritin-3, chloroplastic, found in Glycine max (Soybean).